Here is a 126-residue protein sequence, read N- to C-terminus: Histone H2B (126 aa).

Residues 1-12 show a composition bias toward low complexity; sequence MPEPAKSAPAPK. The interval 1 to 36 is disordered; it reads MPEPAKSAPAPKKGSKKAVTKTQKKGDKKRKKSRKE. N6-acetyllysine is present on residues K6 and K13. Over residues 13–34 the composition is skewed to basic residues; it reads KGSKKAVTKTQKKGDKKRKKSR. The residue at position 15 (S15) is a Phosphoserine. 2 positions are modified to N6-acetyllysine: K16 and K21. K121 is covalently cross-linked (Glycyl lysine isopeptide (Lys-Gly) (interchain with G-Cter in ubiquitin)).

Belongs to the histone H2B family. In terms of assembly, the nucleosome is a histone octamer containing two molecules each of H2A, H2B, H3 and H4 assembled in one H3-H4 heterotetramer and two H2A-H2B heterodimers. The octamer wraps approximately 147 bp of DNA. In terms of processing, monoubiquitination of Lys-121 by the RNF20/40 complex gives a specific tag for epigenetic transcriptional activation and is also prerequisite for histone H3 'Lys-4' and 'Lys-79' methylation. Post-translationally, phosphorylated on Ser-15 during apoptosis; which facilitates apoptotic chromatin condensation.

Its subcellular location is the nucleus. The protein resides in the chromosome. Functionally, core component of nucleosome. Nucleosomes wrap and compact DNA into chromatin, limiting DNA accessibility to the cellular machineries which require DNA as a template. Histones thereby play a central role in transcription regulation, DNA repair, DNA replication and chromosomal stability. DNA accessibility is regulated via a complex set of post-translational modifications of histones, also called histone code, and nucleosome remodeling. The sequence is that of Histone H2B from Cairina moschata (Muscovy duck).